A 425-amino-acid polypeptide reads, in one-letter code: Acyl-lipid (8-3)-desaturase (425 aa).

The interval 1–25 (MPPRDSYSYAAPPSAQLHEVDTPQE) is disordered. A Cytochrome b5 heme-binding domain is found at 18-93 (HEVDTPQEHD…SRPVHKGYSP (76 aa)). Residues His-47 and His-69 each coordinate heme. Residues 134-154 (VAGAALIWHGYTFAGIAMLGV) traverse the membrane as a helical segment. The Histidine box-1 signature appears at 164–168 (HEGGH). The helical transmembrane segment at 175–197 (IAFDRAIQVACYGLGCGMSGAWW) threads the bilayer. Residues 201–206 (HNKHHA) carry the Histidine box-2 motif. 2 consecutive transmembrane segments (helical) span residues 241 to 261 (WLSM…ALGW) and 297 to 317 (GAGY…MYIF). Residues 365-369 (QIEHH) carry the Histidine box-3 motif.

The protein belongs to the fatty acid desaturase type 1 family. Requires Fe(2+) as cofactor.

It localises to the membrane. It carries out the reaction an (8Z,11Z,14Z)-icosatrienoyl-containing glycerolipid + 2 Fe(II)-[cytochrome b5] + O2 + 2 H(+) = (5Z,8Z,11Z,14Z)-eicosatetraenoyl-containing glycerolipid + 2 Fe(III)-[cytochrome b5] + 2 H2O. It catalyses the reaction an (8Z,11Z,14Z,17Z)-eicosatetraenoyl-containing glycerolipid + 2 Fe(II)-[cytochrome b5] + O2 + 2 H(+) = a (5Z,8Z,11Z,14Z,17Z)-eicosapentaenoyl-containing glycerolipid + 2 Fe(III)-[cytochrome b5] + 2 H2O. Its function is as follows. Fatty acid desaturase that introduces a cis double bond at the 5-position in 20-carbon polyunsaturated fatty acids incorporated in a glycerolipid that contain a Delta(8) double bond. In Rebecca salina (Marine microalga), this protein is Acyl-lipid (8-3)-desaturase.